Here is a 64-residue protein sequence, read N- to C-terminus: MKTTELRAKDVAGIEAEIKALQKAHFSLRMQKATQQLSNTSTLRTTRRAIARAKTILAQKQAAH.

The protein belongs to the universal ribosomal protein uL29 family.

In Verminephrobacter eiseniae (strain EF01-2), this protein is Large ribosomal subunit protein uL29.